An 838-amino-acid polypeptide reads, in one-letter code: Lymphoid-specific helicase (838 aa).

A coiled-coil region spans residues 30–115 (MLEEEEQLEA…SLKVKKGKNS (86 aa)). Over residues 94 to 108 (QKKKEKLERKKESLK) the composition is skewed to basic and acidic residues. The interval 94–135 (QKKKEKLERKKESLKVKKGKNSIDASEEKPVMRKKRGREDES) is disordered. Ser-115 bears the Phosphoserine mark. The segment covering 119–134 (SEEKPVMRKKRGREDE) has biased composition (basic and acidic residues). A Helicase ATP-binding domain is found at 235 to 403 (RMLWENGING…WSLLNFLLPD (169 aa)). 248-255 (DEMGLGKT) contributes to the ATP binding site. Residues 354-357 (DEGH) carry the DEAH box motif. Residues Ser-503 and Ser-515 each carry the phosphoserine modification. The 165-residue stretch at 603-767 (ILDRMLPELK…GLNLSKNFLD (165 aa)) folds into the Helicase C-terminal domain.

It belongs to the SNF2/RAD54 helicase family. In terms of tissue distribution, highly expressed in proliferative tissues such as adult thymus and testis, and expressed at lower levels in uterus, small intestine, colon, and peripheral blood mononuclear cells. Also expressed in neoplastic cell lines including those derived from myeloid and lymphoid leukemias.

It localises to the nucleus. Its function is as follows. Plays an essential role in normal development and survival. Involved in regulation of the expansion or survival of lymphoid cells. Required for de novo or maintenance DNA methylation. May control silencing of the imprinted CDKN1C gene through DNA methylation. May play a role in formation and organization of heterochromatin, implying a functional role in the regulation of transcription and mitosis. The polypeptide is Lymphoid-specific helicase (Homo sapiens (Human)).